The following is a 109-amino-acid chain: N-alpha-acetyltransferase 38, NatC auxiliary subunit (109 aa).

The Sm domain maps to 23–101 (LARCKLENLL…VVSIEVETES (79 aa)).

It belongs to the snRNP Sm proteins family. In terms of assembly, component of the N-terminal acetyltransferase C (NatC) complex.

It localises to the cytoplasm. The protein resides in the nucleus. Its function is as follows. Auxillary component of the N-terminal acetyltransferase C (NatC) complex which catalyzes acetylation of N-terminal methionine residues. N-terminal acetylation protects proteins from ubiquitination and degradation by the N-end rule pathway. The chain is N-alpha-acetyltransferase 38, NatC auxiliary subunit (naa38) from Danio rerio (Zebrafish).